The following is an 874-amino-acid chain: Coatomer subunit gamma-1 (874 aa).

The segment covering 1-11 has biased composition (basic and acidic residues); sequence MLKKFDKKDEE. The disordered stretch occupies residues 1–21; the sequence is MLKKFDKKDEESGGGSNPFQH. 4 HEAT repeats span residues 64–101, 283–320, 322–355, and 356–392; these read TEATEAFFAMTKLFQSNDPTLRRMCYLTIKEMSCIAED, KELAPAVSVLQLFCSSPKAALRYAAVRTLNKVAMKHPS, VTACNLDLENLVTDANRSIATLAITTLLKTGSEG, and SIDRLMKQISSFMSEISDEFKVVVVQAISALCQKYPR. Phosphothreonine is present on threonine 594. Residues 609–874 are interaction with ZNF289/ARFGAP2; that stretch reads RQEIFQEQLA…PVDIVLASVG (266 aa).

It belongs to the COPG family. Oligomeric complex that consists of at least the alpha, beta, beta', gamma, delta, epsilon and zeta subunits. Interacts with ZNF289/ARFGAP2 through its C-terminal appendage domain. Interacts with EGFR upon EGF treatment; interaction is essential for regulation of EGF-dependent nuclear transport of EGFR by retrograde trafficking from the Golgi to the ER. The coatomer interacts with KDEL receptors; the interaction is important for retrograde trafficking of KDEL-bearing proteins from the Golgi to the endoplasmic reticulum. Interacts with COPB1. Interacts with TMED10 (via C-terminus). Interacts with TMED2, TMED3, TMED7 and TMED9.

The protein resides in the cytoplasm. The protein localises to the cytosol. Its subcellular location is the golgi apparatus membrane. It localises to the cytoplasmic vesicle. It is found in the COPI-coated vesicle membrane. Its function is as follows. The coatomer is a cytosolic protein complex that binds to dilysine motifs and reversibly associates with Golgi non-clathrin-coated vesicles, which further mediate biosynthetic protein transport from the ER, via the Golgi up to the trans Golgi network. Coatomer complex is required for budding from Golgi membranes, and is essential for the retrograde Golgi-to-ER transport of dilysine-tagged proteins. In mammals, the coatomer can only be recruited by membranes associated to ADP-ribosylation factors (ARFs), which are small GTP-binding proteins; the complex also influences the Golgi structural integrity, as well as the processing, activity, and endocytic recycling of LDL receptors. Required for limiting lipid storage in lipid droplets. Involved in lipid homeostasis by regulating the presence of perilipin family members PLIN2 and PLIN3 at the lipid droplet surface and promoting the association of adipocyte triglyceride lipase (PNPLA2) with the lipid droplet surface to mediate lipolysis. This Bos taurus (Bovine) protein is Coatomer subunit gamma-1 (COPG1).